Reading from the N-terminus, the 612-residue chain is Kelch-like protein 40a (612 aa).

The BTB domain occupies Val-34 to Glu-101. Positions Cys-136–Glu-238 constitute a BACK domain. The span at Arg-266–Glu-275 shows a compositional bias: basic residues. The interval Arg-266 to Gly-290 is disordered. A compositionally biased stretch (acidic residues) spans Phe-281–Gly-290. Kelch repeat units follow at residues Gln-350–Asn-402, Ser-403–Gly-452, Leu-453–Asn-500, Ile-502–Gly-547, and Leu-549–Leu-604.

This sequence belongs to the KLHL40 family. In terms of assembly, component of the BCR(KLHL40) E3 ubiquitin ligase complex. In terms of tissue distribution, expressed in skeletal muscle and heart. Detected, although at much lower levels, in brain, eye and fin.

It is found in the cytoplasm. The protein resides in the myofibril. The protein localises to the sarcomere. It localises to the a band. Its subcellular location is the i band. In terms of biological role, substrate-specific adapter of a BCR (BTB-CUL3-RBX1) E3 ubiquitin ligase complex. Required for skeletal muscle development. The sequence is that of Kelch-like protein 40a (klhl40a) from Danio rerio (Zebrafish).